Here is a 644-residue protein sequence, read N- to C-terminus: Interleukin-23 receptor (644 aa).

Residues 1 to 23 (MSHLTLQLHVVIALYVLFRWCHG) form the signal peptide. Residues 24 to 374 (GITSINCSGD…PASGNHQDIG (351 aa)) lie on the Extracellular side of the membrane. N-linked (GlcNAc...) asparagine glycosylation is found at asparagine 47, asparagine 130, and asparagine 232. Fibronectin type-III domains lie at 127-217 (APSN…LDDI) and 219-318 (IPSA…TSQE). Residues 375–395 (LLSGMVFLAIMLPIFSLIGIF) traverse the membrane as a helical segment. Over 396-644 (NRSLRIGIKR…HFSRISLFQK (249 aa)) the chain is Cytoplasmic.

This sequence belongs to the type I cytokine receptor family. Type 2 subfamily. Heterodimer with IL12RB1. In presence of IL23, the heterodimer forms the IL23 receptor. Interacts with JAK2 and in presence of IL23 with STAT3. In terms of processing, phosphorylated in response to IL23. As to expression, expressed by Th1, Th2 and dendritic cells.

It localises to the cell membrane. Associates with IL12RB1 to form the interleukin-23 receptor. Binds IL23 and mediates T-cells, NK cells and possibly certain macrophage/myeloid cells stimulation probably through activation of the Jak-Stat signaling cascade. IL23 functions in innate and adaptive immunity and may participate in acute response to infection in peripheral tissues. IL23 may be responsible for autoimmune inflammatory diseases and be important for tumorigenesis. This Mus musculus (Mouse) protein is Interleukin-23 receptor (Il23r).